Consider the following 554-residue polypeptide: Thermosome subunit beta (554 aa).

The segment at 532–554 is disordered; it reads GKKSGSEPSGKKEKDKEEKSSED. Positions 540 to 554 are enriched in basic and acidic residues; the sequence is SGKKEKDKEEKSSED.

It belongs to the TCP-1 chaperonin family. In terms of assembly, forms a Heterooligomeric complex of two stacked eight-membered rings.

Its function is as follows. Molecular chaperone; binds unfolded polypeptides in vitro, and has a weak ATPase activity. The polypeptide is Thermosome subunit beta (thsB) (Saccharolobus solfataricus (strain ATCC 35092 / DSM 1617 / JCM 11322 / P2) (Sulfolobus solfataricus)).